A 103-amino-acid chain; its full sequence is Large ribosomal subunit protein uL24 (103 aa).

The protein belongs to the universal ribosomal protein uL24 family. In terms of assembly, part of the 50S ribosomal subunit.

Functionally, one of two assembly initiator proteins, it binds directly to the 5'-end of the 23S rRNA, where it nucleates assembly of the 50S subunit. In terms of biological role, one of the proteins that surrounds the polypeptide exit tunnel on the outside of the subunit. This Actinobacillus pleuropneumoniae serotype 3 (strain JL03) protein is Large ribosomal subunit protein uL24.